Here is a 201-residue protein sequence, read N- to C-terminus: LexA repressor (201 aa).

Positions 28–48 form a DNA-binding region, H-T-H motif; sequence LREIAAQLGISGTLGVMKHLE. Catalysis depends on for autocatalytic cleavage activity residues Ser120 and Lys157.

This sequence belongs to the peptidase S24 family. Homodimer.

The catalysed reaction is Hydrolysis of Ala-|-Gly bond in repressor LexA.. In terms of biological role, represses a number of genes involved in the response to DNA damage (SOS response), including recA and lexA. In the presence of single-stranded DNA, RecA interacts with LexA causing an autocatalytic cleavage which disrupts the DNA-binding part of LexA, leading to derepression of the SOS regulon and eventually DNA repair. This Citrifermentans bemidjiense (strain ATCC BAA-1014 / DSM 16622 / JCM 12645 / Bem) (Geobacter bemidjiensis) protein is LexA repressor.